A 480-amino-acid chain; its full sequence is Adenosylhomocysteinase (480 aa).

Substrate contacts are provided by threonine 63, aspartate 142, and glutamate 203. 204-206 (TTT) lines the NAD(+) pocket. Substrate contacts are provided by lysine 233 and aspartate 237. NAD(+) contacts are provided by residues asparagine 238, 267 to 272 (GYGDVG), glutamate 290, asparagine 325, 346 to 348 (IGH), and asparagine 394.

Belongs to the adenosylhomocysteinase family. NAD(+) is required as a cofactor.

It localises to the cytoplasm. It catalyses the reaction S-adenosyl-L-homocysteine + H2O = L-homocysteine + adenosine. It functions in the pathway amino-acid biosynthesis; L-homocysteine biosynthesis; L-homocysteine from S-adenosyl-L-homocysteine: step 1/1. Functionally, may play a key role in the regulation of the intracellular concentration of adenosylhomocysteine. The polypeptide is Adenosylhomocysteinase (Xanthomonas oryzae pv. oryzae (strain PXO99A)).